A 1384-amino-acid polypeptide reads, in one-letter code: MTSYSFTEKKRIRKDFGKHRSILKVPFLLAIQVDSYRAFLQGDVESSQRKDIGLHGALKSVFPIVSYSGNAALEYVGYKLGEPMFDERECRQRGMSYGAPLRVTVRLVIYDRESSTKAVKYIKEQEVYLGEIPLMTENGTFIVNGTERVIVSQLHRSPGVFFDHDRGKTHSSGKLLYSARIIPCRGSWLDFEFDPKDALFTRIDRRRKLPVSILLRALGYSNEEILGEFFEINTFHINPDKGVQLELVPERLRGEILSFNLTDGGGVIVEAGKRITARHVKQLEASGISALAVPDDYLIGRILSHDVIDATTGELLASANSEVNEDRIVAFRKAGIESVGTLWVNDLDRGAYLSNTLRIDPTRTQLEAQVEIYRMMRPGEPPTKEAAQNLFHNLFFTFDRYDLSMVGRMKFNRRVGRKEVAGEPVLYDKKYFSDRNDEESRRLVSKLGETSDILDVIKGLCEIRNGRGVVDDIDHLGNRRVRSVGEMAENVFRVGLVRVERAVKERLSMAESEGLTPQELINAKPVAAAIKEFFGSSQLSQFMDQNNPLSEVTHKRRLSALGPGGLTRERAGFEVRDVHLSHYGCLCTIETPEGPNIGLINSLAVFARTNQYGFLETPYRKVVEGRVTDEVEYLSAIEENQYVIAQANTLTDDNGQLTESFVPCRFQGESLLKPPSYVHYMDVSPMQTVSVAAALVPFLEHDDANRALMGANMQRQAVPTLRAQKPLVGTGIERTVALDSGVTVNARRGGVIDQVDAGRIVVKVNESEIIGATDAGVDIYGLIKYTRSNQNTCINQRPLVNVGDIIASGDVLADGPSTDIGELALGQNMLIAFMPWNGYNFEDSILLSERVVEEDRYTTIHIEELTCIARDTKLGSEEISADIPNVSEQALNRLDESGVVYIGAEVRAGDILVGKVTPKGESQLTPEEKLLRAIFGEKASDVKDSSLRVPPGMDGTVIDVQVFTRDGIEKDKRAHQIEEYEIKRVKKDFDDQFRILEGAIYARLRSQIVGKVVNSGVDIKKGEVITGPYLDGLKKSDWFALRMKDEVAVEAIDRAQKQIQAYQKEFDQRFSDKRSKITQGDDLAPGVLKMVKVFLAVKRCIQCGDKMAGRHGNKGVISNIVPVEDMPFMEDGTPVDIVLNPLGVPSRMNIGQILEVHLGWAAKGLGHRIQRMLEANAAIADLRKFLNEIYNHDKSLVGERVDLSQFSDDELLNMAKNLTDGVPMASPVFDGASEQEIKRMLDLAELPTGGQTQLYDGHTGEPFDRKTTVGYMHYLKLNHLVDDKMHARSTGPYSLVTQQPLGGKAQFGGQRFGEMEVWALEAYGAAYTLQEMLTVKSDDVQGRNQMYKNIVDGDHQMVAGMPESFNVLVKEIRSLAINIELEDN.

This sequence belongs to the RNA polymerase beta chain family. As to quaternary structure, the RNAP catalytic core consists of 2 alpha, 1 beta, 1 beta' and 1 omega subunit. When a sigma factor is associated with the core the holoenzyme is formed, which can initiate transcription.

It carries out the reaction RNA(n) + a ribonucleoside 5'-triphosphate = RNA(n+1) + diphosphate. DNA-dependent RNA polymerase catalyzes the transcription of DNA into RNA using the four ribonucleoside triphosphates as substrates. The sequence is that of DNA-directed RNA polymerase subunit beta from Xylella fastidiosa (strain M12).